The chain runs to 255 residues: Aspartate/glutamate leucyltransferase (255 aa).

It belongs to the R-transferase family. Bpt subfamily.

It localises to the cytoplasm. It carries out the reaction N-terminal L-glutamyl-[protein] + L-leucyl-tRNA(Leu) = N-terminal L-leucyl-L-glutamyl-[protein] + tRNA(Leu) + H(+). It catalyses the reaction N-terminal L-aspartyl-[protein] + L-leucyl-tRNA(Leu) = N-terminal L-leucyl-L-aspartyl-[protein] + tRNA(Leu) + H(+). Its function is as follows. Functions in the N-end rule pathway of protein degradation where it conjugates Leu from its aminoacyl-tRNA to the N-termini of proteins containing an N-terminal aspartate or glutamate. This is Aspartate/glutamate leucyltransferase from Leptospira borgpetersenii serovar Hardjo-bovis (strain JB197).